The chain runs to 212 residues: Orotate phosphoribosyltransferase (212 aa).

5-phospho-alpha-D-ribose 1-diphosphate is bound by residues Arg-95, Lys-99, His-101, and 121–129 (DDLITTGGS). Orotate is bound at residue Thr-125.

The protein belongs to the purine/pyrimidine phosphoribosyltransferase family. PyrE subfamily. As to quaternary structure, homodimer. Mg(2+) is required as a cofactor.

It carries out the reaction orotidine 5'-phosphate + diphosphate = orotate + 5-phospho-alpha-D-ribose 1-diphosphate. The protein operates within pyrimidine metabolism; UMP biosynthesis via de novo pathway; UMP from orotate: step 1/2. Functionally, catalyzes the transfer of a ribosyl phosphate group from 5-phosphoribose 1-diphosphate to orotate, leading to the formation of orotidine monophosphate (OMP). This Lactobacillus johnsonii (strain CNCM I-12250 / La1 / NCC 533) protein is Orotate phosphoribosyltransferase.